A 198-amino-acid chain; its full sequence is Lipoprotein signal peptidase (198 aa).

The segment at 1-34 (MDDERVSQDPTAENETDAEDRNDDDPSGSAPPQP) is disordered. Acidic residues predominate over residues 12 to 26 (AENETDAEDRNDDDP). 3 helical membrane-spanning segments follow: residues 42–62 (LLFVIAGVVLATDLLTKILAV), 92–112 (MATGMTWLLTLVAVGVVIGVV), and 120–140 (SPWWALGLGLVLGGALGNLVD). Active-site residues include aspartate 155 and aspartate 169. The helical transmembrane segment at 167-187 (VADSGIVCGAILLVVLTLIGL) threads the bilayer.

The protein belongs to the peptidase A8 family.

It is found in the cell membrane. It carries out the reaction Release of signal peptides from bacterial membrane prolipoproteins. Hydrolyzes -Xaa-Yaa-Zaa-|-(S,diacylglyceryl)Cys-, in which Xaa is hydrophobic (preferably Leu), and Yaa (Ala or Ser) and Zaa (Gly or Ala) have small, neutral side chains.. The protein operates within protein modification; lipoprotein biosynthesis (signal peptide cleavage). Its function is as follows. This protein specifically catalyzes the removal of signal peptides from prolipoproteins. The protein is Lipoprotein signal peptidase of Rhodococcus jostii (strain RHA1).